We begin with the raw amino-acid sequence, 620 residues long: Probable potassium transport system protein Kup (620 aa).

Helical transmembrane passes span 7-27 (LALA…LYAI), 44-64 (VFGV…LKYL), 98-118 (FFLI…GMIT), 135-155 (PAFH…LFLF), 166-186 (LFGP…LVEI), 201-221 (GIMF…AVFL), 245-265 (WAFL…ALLL), 278-298 (LVPS…TIIA), 335-355 (IYVP…VIGF), 361-381 (LAAA…ILFY), 394-414 (VLNV…GASA), and 417-437 (LFHG…VMMT).

Belongs to the HAK/KUP transporter (TC 2.A.72) family.

It localises to the cell inner membrane. The catalysed reaction is K(+)(in) + H(+)(in) = K(+)(out) + H(+)(out). Transport of potassium into the cell. Likely operates as a K(+):H(+) symporter. In Chlorobium chlorochromatii (strain CaD3), this protein is Probable potassium transport system protein Kup.